The chain runs to 418 residues: Gamma-glutamyl phosphate reductase (418 aa).

Belongs to the gamma-glutamyl phosphate reductase family.

The protein localises to the cytoplasm. The catalysed reaction is L-glutamate 5-semialdehyde + phosphate + NADP(+) = L-glutamyl 5-phosphate + NADPH + H(+). The protein operates within amino-acid biosynthesis; L-proline biosynthesis; L-glutamate 5-semialdehyde from L-glutamate: step 2/2. Catalyzes the NADPH-dependent reduction of L-glutamate 5-phosphate into L-glutamate 5-semialdehyde and phosphate. The product spontaneously undergoes cyclization to form 1-pyrroline-5-carboxylate. In Pelobacter propionicus (strain DSM 2379 / NBRC 103807 / OttBd1), this protein is Gamma-glutamyl phosphate reductase.